The sequence spans 378 residues: Cyclic GMP-AMP synthase-like receptor 1 (378 aa).

3 residues coordinate Mg(2+): glutamate 71, aspartate 73, and aspartate 187. ATP is bound at residue 71–73; that stretch reads EFD. Residues aspartate 187 and 233 to 240 contribute to the GTP site; that span reads TSSFYEAE. ATP is bound by residues 237 to 240, lysine 258, and 271 to 275; these read YEAE and SYHIK.

It belongs to the mab-21 family. The cofactor is Mg(2+). It depends on Mn(2+) as a cofactor.

The catalysed reaction is GTP + ATP = 3',2'-cGAMP + 2 diphosphate. It catalyses the reaction GTP + ATP = pppA(2'-5')pG + diphosphate. It carries out the reaction pppA(2'-5')pG = 3',2'-cGAMP + diphosphate. Its activity is regulated as follows. The enzyme activity is specifically activated by double-stranded RNA (dsRNA). Recognizes long dsRNA (&gt;30 bp) with no preference for 5' RNA phosphorylation. Nucleotidyltransferase that catalyzes the formation of cyclic GMP-AMP (3',2'-cGAMP) from ATP and GTP and plays a key role in antiviral innate immunity. Synthesizes 3',2'-cGAMP in a two-step reaction through production of the linear intermediate pppA(2'-5')pG. Acts as a key sensor of double-stranded RNA (dsRNA), the presence of dsRNA in the cytoplasm being a danger signal that triggers the immune responses. Directly binds dsRNA, activating the nucleotidyltransferase activity, leading to synthesis of 3',2'-cGAMP, a second messenger that binds to and activates Sting, thereby triggering the antiviral immune response via activation of the NF-kappa-B transcription factor Rel (Relish). 3',2'-cGAMP is protected from poxin cleavage. The protein is Cyclic GMP-AMP synthase-like receptor 1 of Drosophila melanogaster (Fruit fly).